Reading from the N-terminus, the 738-residue chain is Vesicle-fusing ATPase (738 aa).

ATP is bound by residues 507-512 and 547-554; these read NGIINY and PGCGKSSL.

This sequence belongs to the AAA ATPase family. In terms of assembly, interacts with syn7A, snpA and snpC. Mg(2+) serves as cofactor.

The protein resides in the cytoplasmic vesicle membrane. It localises to the endosome membrane. The enzyme catalyses ATP + H2O = ADP + phosphate + H(+). In terms of biological role, required for vesicle-mediated transport. Involved in endocytosis and endosome-endosome fusion. May be required for transport from the endoplasmic reticulum to the Golgi stack, and for the fusion of transport vesicles within the Golgi cisternae. Required for cell polarity, locomotion and chemotaxis. In Dictyostelium discoideum (Social amoeba), this protein is Vesicle-fusing ATPase (nsfA).